The following is a 273-amino-acid chain: Urease accessory protein UreD (273 aa).

This sequence belongs to the UreD family. UreD, UreF and UreG form a complex that acts as a GTP-hydrolysis-dependent molecular chaperone, activating the urease apoprotein by helping to assemble the nickel containing metallocenter of UreC. The UreE protein probably delivers the nickel.

It is found in the cytoplasm. Its function is as follows. Required for maturation of urease via the functional incorporation of the urease nickel metallocenter. The polypeptide is Urease accessory protein UreD (Rhizobium leguminosarum bv. trifolii (strain WSM2304)).